Consider the following 507-residue polypeptide: Glycerol kinase (507 aa).

Residue T12 participates in ADP binding. T12, T13, and S14 together coordinate ATP. A sn-glycerol 3-phosphate-binding site is contributed by T12. Residue R16 participates in ADP binding. R82, E83, Y134, and D250 together coordinate sn-glycerol 3-phosphate. Positions 82, 83, 134, 250, and 251 each coordinate glycerol. ADP contacts are provided by T272 and G316. Positions 272, 316, 320, and 417 each coordinate ATP. G417 and N421 together coordinate ADP.

This sequence belongs to the FGGY kinase family.

It catalyses the reaction glycerol + ATP = sn-glycerol 3-phosphate + ADP + H(+). It functions in the pathway polyol metabolism; glycerol degradation via glycerol kinase pathway; sn-glycerol 3-phosphate from glycerol: step 1/1. Inhibited by fructose 1,6-bisphosphate (FBP). Its function is as follows. Key enzyme in the regulation of glycerol uptake and metabolism. Catalyzes the phosphorylation of glycerol to yield sn-glycerol 3-phosphate. This Beijerinckia indica subsp. indica (strain ATCC 9039 / DSM 1715 / NCIMB 8712) protein is Glycerol kinase.